The chain runs to 244 residues: Ribonuclease 3 2 (244 aa).

The RNase III domain occupies 11–136 (LKALLRRLGL…LLGALYLSVG (126 aa)). Glutamate 50 provides a ligand contact to Mg(2+). Aspartate 54 is an active-site residue. Mg(2+) contacts are provided by aspartate 122 and glutamate 125. The active site involves glutamate 125. Residues 164-234 (NYKEALQAWT…AQQAYQDFIA (71 aa)) form the DRBM domain.

The protein belongs to the ribonuclease III family. As to quaternary structure, homodimer. Mg(2+) is required as a cofactor.

Its subcellular location is the cytoplasm. It catalyses the reaction Endonucleolytic cleavage to 5'-phosphomonoester.. In terms of biological role, digests double-stranded RNA. Involved in the processing of primary rRNA transcript to yield the immediate precursors to the large and small rRNAs (23S and 16S). Processes some mRNAs, and tRNAs when they are encoded in the rRNA operon. Processes pre-crRNA and tracrRNA of type II CRISPR loci if present in the organism. This chain is Ribonuclease 3 2, found in Synechocystis sp. (strain ATCC 27184 / PCC 6803 / Kazusa).